The chain runs to 365 residues: Phospho-N-acetylmuramoyl-pentapeptide-transferase (365 aa).

10 helical membrane-spanning segments follow: residues 22-42 (YISV…LALG), 74-94 (TMGG…WGDL), 95-115 (TSIY…IGFF), 134-154 (KFAL…YLLS), 168-188 (SLYI…IING), 201-221 (GLAI…AYIE), 240-260 (LAEV…FLWF), 267-287 (VFMG…IAVM), 292-312 (LIFF…MLQV), and 342-362 (KVVI…LAAI).

This sequence belongs to the glycosyltransferase 4 family. MraY subfamily. Requires Mg(2+) as cofactor.

It localises to the cell inner membrane. It catalyses the reaction UDP-N-acetyl-alpha-D-muramoyl-L-alanyl-gamma-D-glutamyl-meso-2,6-diaminopimeloyl-D-alanyl-D-alanine + di-trans,octa-cis-undecaprenyl phosphate = di-trans,octa-cis-undecaprenyl diphospho-N-acetyl-alpha-D-muramoyl-L-alanyl-D-glutamyl-meso-2,6-diaminopimeloyl-D-alanyl-D-alanine + UMP. It functions in the pathway cell wall biogenesis; peptidoglycan biosynthesis. Functionally, catalyzes the initial step of the lipid cycle reactions in the biosynthesis of the cell wall peptidoglycan: transfers peptidoglycan precursor phospho-MurNAc-pentapeptide from UDP-MurNAc-pentapeptide onto the lipid carrier undecaprenyl phosphate, yielding undecaprenyl-pyrophosphoryl-MurNAc-pentapeptide, known as lipid I. This chain is Phospho-N-acetylmuramoyl-pentapeptide-transferase, found in Francisella tularensis subsp. mediasiatica (strain FSC147).